The chain runs to 533 residues: Tyrosine ammonia-lyase (533 aa).

Tyr-57 serves as the catalytic Proton donor/acceptor. His-87 is a substrate binding site. The 5-imidazolinone (Ala-Gly) cross-link spans 146–148; it reads ASG. Residue Ser-147 is modified to 2,3-didehydroalanine (Ser). Residues Asn-200 and Arg-305 each coordinate substrate.

It belongs to the TAL/TAM family. As to quaternary structure, homotetramer; dimer of dimers. Post-translationally, contains an active site 4-methylidene-imidazol-5-one (MIO), which is formed autocatalytically by cyclization and dehydration of residues Ala-Ser-Gly.

It carries out the reaction L-tyrosine = (E)-4-coumarate + NH4(+). It catalyses the reaction L-tyrosine = 3-amino-3-(4-hydroxyphenyl)propanoate. In terms of biological role, has ammonia-lyase and, to a lesser extent, aminomutase activity. Catalyzes the rearrangement of L-tyrosine to R-beta-tyrosine and S-beta-tyrosine. Does not accept L-histidine or L-phenylalanine as substrates. In Cupriavidus metallidurans (strain ATCC 43123 / DSM 2839 / NBRC 102507 / CH34) (Ralstonia metallidurans), this protein is Tyrosine ammonia-lyase.